Here is a 201-residue protein sequence, read N- to C-terminus: Protamine-like protein 99C (201 aa).

The disordered stretch occupies residues 93-143 (GGQQSSCQRQSPSARLRESERRSSRSKTLCRSAKNRQRGKPKPQQSKRRLS). The span at 94 to 104 (GQQSSCQRQSP) shows a compositional bias: polar residues. Positions 125–143 (AKNRQRGKPKPQQSKRRLS) are enriched in basic residues.

This sequence belongs to the UPF0771 family.

It is found in the nucleus. The protein resides in the chromosome. Regulates chromatin compaction in spermatid nuclei and is essential for male fertility. Functions in parallel with other chromatin-condensing proteins such as ProtA, ProtB and Mst77F. The protein is Protamine-like protein 99C of Drosophila melanogaster (Fruit fly).